We begin with the raw amino-acid sequence, 258 residues long: MTKTAVITGSTSGIGLAIARTLAKAGANIVLNGFGAPDEIRTVTDEVAGLSSGTVLHHPADMTKPSEIADMMAMVADRFGGADILVNNAGVQFVEKIEDFPVEQWDRIIAVNLSSSFHTIRGAIPPMKKKGWGRIINIASAHGLVASPFKSAYVAAKHGIMGLTKTVALEVAESGVTVNSICPGYVLTPLVEKQIPDQARTRGITEEQVINEVMLKGQPTKKFITVEQVASLALYLAGDDAAQITGTHVSMDGGWTAQ.

Residue 6 to 30 (VITGSTSGIGLAIARTLAKAGANIV) participates in NAD(+) binding. S140 is a substrate binding site. Y153 functions as the Proton acceptor in the catalytic mechanism.

The protein belongs to the short-chain dehydrogenases/reductases (SDR) family.

It carries out the reaction (R)-3-hydroxybutanoate + NAD(+) = acetoacetate + NADH + H(+). This Rhizobium meliloti (strain 1021) (Ensifer meliloti) protein is D-beta-hydroxybutyrate dehydrogenase (bdhA).